A 175-amino-acid chain; its full sequence is METNCPNILYLSGITIEECLQSKKTATDTLNTNDDEAEVEKKLPSVFTTVSKWVTHSSFKCWTCHLYFKTVPKFVPTYMRENERGEIEMGVLGNFCSFSCAASYVDVHYTEPKRWEARELLNMLYRFFTSQWISYIKPAPSYTMRKEYGGKLSEEAFISELHTLEESISSKHIFI.

This sequence belongs to the asfivirus B175L family.

This is an uncharacterized protein from Ornithodoros (relapsing fever ticks).